The chain runs to 223 residues: Adenine phosphoribosyltransferase (223 aa).

The protein belongs to the purine/pyrimidine phosphoribosyltransferase family. In terms of assembly, homodimer.

It localises to the cytoplasm. The catalysed reaction is AMP + diphosphate = 5-phospho-alpha-D-ribose 1-diphosphate + adenine. It participates in purine metabolism; AMP biosynthesis via salvage pathway; AMP from adenine: step 1/1. Its function is as follows. Catalyzes a salvage reaction resulting in the formation of AMP, that is energically less costly than de novo synthesis. The sequence is that of Adenine phosphoribosyltransferase from Mycobacterium bovis (strain ATCC BAA-935 / AF2122/97).